Reading from the N-terminus, the 25-residue chain is Grammistin Pp 3 (25 aa).

The protein belongs to the grammistin family. Group 3 subfamily. In terms of assembly, exists as aggregates of 3-4 molecules. In terms of tissue distribution, expressed by the skin glands.

It is found in the secreted. In terms of biological role, thanks to its abundant amphiphilic alpha-helices, it may integrate into membrane phospholipids, leading to lysis of the membrane. Has hemolytic activity. Has antibacterial activity with a broad spectrum against various species of bacteria including both Gram-positive and Gram-negative groups. Also has ichthyotoxic activity. This chain is Grammistin Pp 3, found in Pogonoperca punctata (Clown grouper).